Here is a 256-residue protein sequence, read N- to C-terminus: Undecaprenyl-diphosphatase (256 aa).

8 helical membrane passes run 5–25, 41–61, 74–94, 100–120, 135–155, 180–200, 208–228, and 234–254; these read IIEI…PISS, NSLM…VFYF, LLSL…VISS, LLEN…IILY, LNFK…IPGV, FLLA…NAIG, LVLI…KFFL, and FSLN…FIII.

Belongs to the UppP family.

The protein localises to the cell inner membrane. It catalyses the reaction di-trans,octa-cis-undecaprenyl diphosphate + H2O = di-trans,octa-cis-undecaprenyl phosphate + phosphate + H(+). Functionally, catalyzes the dephosphorylation of undecaprenyl diphosphate (UPP). Confers resistance to bacitracin. The protein is Undecaprenyl-diphosphatase of Pelagibacter ubique (strain HTCC1062).